We begin with the raw amino-acid sequence, 221 residues long: Prolactin-3B1 (221 aa).

Positions 1–30 (MQLPLTPLSFSGTLLLMAMSNFLLWEHVTS) are cleaved as a signal peptide. Cystine bridges form between C81/C196 and C213/C221.

This sequence belongs to the somatotropin/prolactin family.

The protein localises to the secreted. This chain is Prolactin-3B1 (PRL3B1), found in Mesocricetus auratus (Golden hamster).